The primary structure comprises 415 residues: Actin-like protein 9 (415 aa).

The tract at residues 1 to 22 is disordered; the sequence is MDVNGHPKFQPSPETDGPLPLT.

Belongs to the actin family. As to quaternary structure, interacts with ACTL7A.

The protein localises to the cytoplasmic vesicle. It localises to the secretory vesicle. Its subcellular location is the acrosome. It is found in the cytoplasm. The protein resides in the cytoskeleton. The protein localises to the perinuclear theca. Testis-specic protein that plays an important role in fusion of proacrosomal vesicles and perinuclear theca formation. The protein is Actin-like protein 9 (Actl9) of Mus musculus (Mouse).